A 293-amino-acid polypeptide reads, in one-letter code: Protease HtpX (293 aa).

Helical transmembrane passes span 4-24 (IALFLLTNLAVMVVFGLVLSL) and 32-52 (VTGLLIMALLFGFGGSIVSLL). His139 lines the Zn(2+) pocket. The active site involves Glu140. His143 lines the Zn(2+) pocket. The next 2 membrane-spanning stretches (helical) occupy residues 158 to 178 (VVNTFVIFISRIIAQVAAGFL) and 193 to 213 (LIYFAVATVLELVFGILASII). Glu222 is a Zn(2+) binding site.

It belongs to the peptidase M48B family. The cofactor is Zn(2+).

The protein resides in the cell inner membrane. The sequence is that of Protease HtpX from Cronobacter sakazakii (strain ATCC BAA-894) (Enterobacter sakazakii).